We begin with the raw amino-acid sequence, 377 residues long: Apelin receptor (377 aa).

Residues 1 to 28 (MEDDGYNYYGADNQSECDYADWKPSGAL) lie on the Extracellular side of the membrane. Residue asparagine 13 is glycosylated (N-linked (GlcNAc...) asparagine). Cystine bridges form between cysteine 17-cysteine 279 and cysteine 100-cysteine 179. A helical transmembrane segment spans residues 29–52 (IPAIYMLVFLLGTTGNGLVLWTVF). Residues 53-62 (RTSREKRRSA) lie on the Cytoplasmic side of the membrane. A helical membrane pass occupies residues 63-84 (DIFIASLAVADLTFVVTLPLWA). At 85-97 (TYTYREFDWPFGT) the chain is on the extracellular side. A helical membrane pass occupies residues 98-123 (FSCKLSSYLIFVNMYASVFCLTGLSF). At 124–144 (DRYLAIVRPVANARLRLRVSG) the chain is on the cytoplasmic side. Residues 145 to 162 (AVATAVLWVLAALLAVPV) traverse the membrane as a helical segment. Over 163–196 (MVFRSTDASENGTKIQCYMDYSMVATSNSEWAWE) the chain is Extracellular. N-linked (GlcNAc...) asparagine glycosylation is present at asparagine 173. The helical transmembrane segment at 197-221 (VGLGVSSTAVGFVVPFTIMLTCYFF) threads the bilayer. Residues 222–244 (IAQTIAGHFRKERIEGLRKRRRL) lie on the Cytoplasmic side of the membrane. Residues 245-268 (LSIIVVLVVTFALCWMPYHLVKTL) form a helical membrane-spanning segment. Residues 269–287 (YMLGSLLHWPCDFDIFLMN) lie on the Extracellular side of the membrane. The helical transmembrane segment at 288-310 (VFPYCTCISYVNSCLNPFLYAFF) threads the bilayer. The Cytoplasmic portion of the chain corresponds to 311–377 (DPRFRQACTS…IPYSQETLVD (67 aa)). Residues 334-377 (HSSSAEKSASYSSGHSQGPGPNMGKGGEQMHEKSIPYSQETLVD) form a disordered region. A compositionally biased stretch (low complexity) spans 335–349 (SSSAEKSASYSSGHS).

It belongs to the G-protein coupled receptor 1 family. In terms of assembly, homodimer; dimerization inhibits APLNR-mediated G protein and beta-arrestin signaling pathways compared to monomeric APLNR. In terms of tissue distribution, expressed in coronary endothelial cells (at protein level). Expressed in the embryo, allantoic and endothelial precursor cells of the yolk sac at 8 days post-coitum (dpc). Expressed in the secondary heart field and somite at 8.25 dpc. Expressed in fetal allantoic endothelial cells at 9 dpc. Expressed in the allantoid and the invading fetal vasculature of the placenta at 9.5 dpc. Expressed in endothelial cells adjacent to syncytiotrophoblast cells at 10.5 dpc. Expressed weakly in the embryonic heart at 11.5 dpc. Expressed in the adult heart. Expressed in endothelial cells and cardiomyocytes and weakly expressed in fibroblasts.

Its subcellular location is the cell membrane. Functionally, g protein-coupled receptor for peptide hormones apelin (APLN) and apelin receptor early endogenous ligand (APELA), that plays a role in the regulation of normal cardiovascular function and fluid homeostasis. When acting as apelin receptor, activates both G(i) protein pathway that inhibits adenylate cyclase activity, and the beta-arrestin pathway leading to internalization of the receptor. APLNR/APJ receptor is also activated by mechanical strech in a G-protein-independent fashion to induce beta-arrestin signaling leading to cardiac hypertrophy. However, the presence of apelin ligand blunts cardiac hypertrophic induction from APLNR/APJ on response to pathological stimuli. Plays a key role in early development such as gastrulation, blood vessels formation and heart morphogenesis by acting as a receptor for APELA hormone. May promote angioblast migration toward the embryonic midline, i.e. the position of the future vessel formation, during vasculogenesis. Promotes sinus venosus (SV)-derived endothelial cells migration into the developing heart to promote coronary blood vessel development. Also plays a role in various processes in adults such as regulation of blood vessel formation, blood pressure and heart contractility and protection from cardiac hypertrophy and heart failure. In Mus musculus (Mouse), this protein is Apelin receptor.